The primary structure comprises 516 residues: Cytochrome P450 1A2 (516 aa).

O-linked (GlcNAc) serine glycosylation is present at S69. A substrate-binding site is contributed by F226. C458 lines the heme pocket.

It belongs to the cytochrome P450 family. As to quaternary structure, interacts with PGRMC1; the interaction requires PGRMC1 homodimerization. Requires heme as cofactor.

It localises to the endoplasmic reticulum membrane. Its subcellular location is the microsome membrane. It catalyses the reaction an organic molecule + reduced [NADPH--hemoprotein reductase] + O2 = an alcohol + oxidized [NADPH--hemoprotein reductase] + H2O + H(+). The catalysed reaction is 17beta-estradiol + reduced [NADPH--hemoprotein reductase] + O2 = 2-hydroxy-17beta-estradiol + oxidized [NADPH--hemoprotein reductase] + H2O + H(+). It carries out the reaction 17beta-estradiol + reduced [NADPH--hemoprotein reductase] + O2 = 4-hydroxy-17beta-estradiol + oxidized [NADPH--hemoprotein reductase] + H2O + H(+). The enzyme catalyses estrone + reduced [NADPH--hemoprotein reductase] + O2 = 2-hydroxyestrone + oxidized [NADPH--hemoprotein reductase] + H2O + H(+). It catalyses the reaction estrone + reduced [NADPH--hemoprotein reductase] + O2 = 4-hydroxyestrone + oxidized [NADPH--hemoprotein reductase] + H2O + H(+). The catalysed reaction is cholesterol + reduced [NADPH--hemoprotein reductase] + O2 = 25-hydroxycholesterol + oxidized [NADPH--hemoprotein reductase] + H2O + H(+). It carries out the reaction all-trans-retinol + reduced [NADPH--hemoprotein reductase] + O2 = all-trans-retinal + oxidized [NADPH--hemoprotein reductase] + 2 H2O + H(+). The enzyme catalyses all-trans-retinal + reduced [NADPH--hemoprotein reductase] + O2 = all-trans-retinoate + oxidized [NADPH--hemoprotein reductase] + H2O + 2 H(+). It catalyses the reaction (5Z,8Z,11Z,14Z)-eicosatetraenoate + reduced [NADPH--hemoprotein reductase] + O2 = (14R,15S)-epoxy-(5Z,8Z,11Z)-eicosatrienoate + oxidized [NADPH--hemoprotein reductase] + H2O + H(+). The catalysed reaction is (5Z,8Z,11Z,14Z)-eicosatetraenoate + reduced [NADPH--hemoprotein reductase] + O2 = (14S,15R)-epoxy-(5Z,8Z,11Z)-eicosatrienoate + oxidized [NADPH--hemoprotein reductase] + H2O + H(+). It carries out the reaction (5Z,8Z,11Z,14Z,17Z)-eicosapentaenoate + reduced [NADPH--hemoprotein reductase] + O2 = (17R,18S)-epoxy-(5Z,8Z,11Z,14Z)-eicosatetraenoate + oxidized [NADPH--hemoprotein reductase] + H2O + H(+). The enzyme catalyses (4Z,7Z,10Z,13Z,16Z,19Z)-docosahexaenoate + reduced [NADPH--hemoprotein reductase] + O2 = (19R,20S)-epoxy-(4Z,7Z,10Z,13Z,16Z)-docosapentaenoate + oxidized [NADPH--hemoprotein reductase] + H2O + H(+). It catalyses the reaction (5S)-hydroperoxy-(6E,8Z,11Z,14Z)-eicosatetraenoate = 5-oxo-(6E,8Z,11Z,14Z)-eicosatetraenoate + H2O. The catalysed reaction is (12S)-hydroperoxy-(5Z,8Z,10E,14Z)-eicosatetraenoate = 12-oxo-(5Z,8Z,10E,14Z)-eicosatetraenoate + H2O. It carries out the reaction (15S)-hydroperoxy-(5Z,8Z,11Z,13E)-eicosatetraenoate = 15-oxo-(5Z,8Z,11Z,13E)-eicosatetraenoate + H2O. The enzyme catalyses (13S)-hydroperoxy-(9Z,11E)-octadecadienoate = 13-oxo-(9Z,11E)-octadecadienoate + H2O. It catalyses the reaction (5Z,8Z,11Z,14Z)-eicosatetraenoate + reduced [NADPH--hemoprotein reductase] + O2 = 13-hydroxy-(5Z,8Z,11Z,14Z)-eicosatetraenoate + oxidized [NADPH--hemoprotein reductase] + H2O + H(+). The catalysed reaction is (5Z,8Z,11Z,14Z)-eicosatetraenoate + reduced [NADPH--hemoprotein reductase] + O2 = 19-hydroxy-(5Z,8Z,11Z,14Z)-eicosatetraenoate + oxidized [NADPH--hemoprotein reductase] + H2O + H(+). It carries out the reaction (9Z,12Z)-octadecadienoate + reduced [NADPH--hemoprotein reductase] + O2 = 11-hydroxy-(9Z,12Z)-octadecadienoate + oxidized [NADPH--hemoprotein reductase] + H2O + H(+). It participates in cofactor metabolism; retinol metabolism. Its pathway is steroid metabolism; cholesterol metabolism. It functions in the pathway lipid metabolism; arachidonate metabolism. A cytochrome P450 monooxygenase involved in the metabolism of various endogenous substrates, including fatty acids, steroid hormones and vitamins. Mechanistically, uses molecular oxygen inserting one oxygen atom into a substrate, and reducing the second into a water molecule, with two electrons provided by NADPH via cytochrome P450 reductase (NADPH--hemoprotein reductase). Catalyzes the hydroxylation of carbon-hydrogen bonds. Exhibits high catalytic activity for the formation of hydroxyestrogens from estrone (E1) and 17beta-estradiol (E2), namely 2-hydroxy E1 and E2. Metabolizes cholesterol toward 25-hydroxycholesterol, a physiological regulator of cellular cholesterol homeostasis. May act as a major enzyme for all-trans retinoic acid biosynthesis in the liver. Catalyzes two successive oxidative transformation of all-trans retinol to all-trans retinal and then to the active form all-trans retinoic acid. Primarily catalyzes stereoselective epoxidation of the last double bond of polyunsaturated fatty acids (PUFA), displaying a strong preference for the (R,S) stereoisomer. Catalyzes bisallylic hydroxylation and omega-1 hydroxylation of PUFA. May also participate in eicosanoids metabolism by converting hydroperoxide species into oxo metabolites (lipoxygenase-like reaction, NADPH-independent). Plays a role in the oxidative metabolism of xenobiotics. Catalyzes the N-hydroxylation of heterocyclic amines and the O-deethylation of phenacetin. Metabolizes caffeine via N3-demethylation. The protein is Cytochrome P450 1A2 (CYP1A2) of Callithrix jacchus (White-tufted-ear marmoset).